Here is a 1320-residue protein sequence, read N- to C-terminus: Bifunctional protein PutA (1320 aa).

The interval 228-574 (LSRSLNRIIG…SFVNRIADAT (347 aa)) is proline dehydrogenase. The aldehyde dehydrogenase stretch occupies residues 653–1119 (QPVADGEMTP…LAHRPPNALN (467 aa)). Residues E883 and C917 contribute to the active site.

It in the N-terminal section; belongs to the proline dehydrogenase family. The protein in the C-terminal section; belongs to the aldehyde dehydrogenase family. FAD is required as a cofactor.

It carries out the reaction L-proline + a quinone = (S)-1-pyrroline-5-carboxylate + a quinol + H(+). The enzyme catalyses L-glutamate 5-semialdehyde + NAD(+) + H2O = L-glutamate + NADH + 2 H(+). The protein operates within amino-acid degradation; L-proline degradation into L-glutamate; L-glutamate from L-proline: step 1/2. Its pathway is amino-acid degradation; L-proline degradation into L-glutamate; L-glutamate from L-proline: step 2/2. Functionally, oxidizes proline to glutamate for use as a carbon and nitrogen source and also function as a transcriptional repressor of the put operon. This is Bifunctional protein PutA (putA) from Salmonella typhimurium (strain LT2 / SGSC1412 / ATCC 700720).